The sequence spans 512 residues: MDLKESPSEGSLQPSSIQIFANTSTLHGIRHIFVYGPLTIRRVLWAVAFVGSLGLLLVESSERVSYYFSYQHVTKVDEVVAQSLVFPAVTLCNLNGFRFSRLTTNDLYHAGELLALLDVNLQIPDPHLADPTVLEALRQKANFKHYKPKQFSMLEFLHRVGHDLKDMMLYCKFKGQECGHQDFTTVFTKYGKCYMFNSGEDGKPLLTTVKGGTGNGLEIMLDIQQDEYLPIWGETEETTFEAGVKVQIHSQSEPPFIQELGFGVAPGFQTFVATQEQRLTYLPPPWGECRSSEMGLDFFPVYSITACRIDCETRYIVENCNCRMVHMPGDAPFCTPEQHKECAEPALGLLAEKDSNYCLCRTPCNLTRYNKELSMVKIPSKTSAKYLEKKFNKSEKYISENILVLDIFFEALNYETIEQKKAYEVAALLGDIGGQMGLFIGASILTILELFDYIYELIKEKLLDLLGKEEEEGSHDENMSTCDTMPNHSETISHTVNVPLQTALGTLEEIAC.

At 1–37 (MDLKESPSEGSLQPSSIQIFANTSTLHGIRHIFVYGP) the chain is on the cytoplasmic side. 2 positions are modified to phosphoserine: serine 8 and serine 11. Residues 38–58 (LTIRRVLWAVAFVGSLGLLLV) form a helical membrane-spanning segment. Residues 59 to 427 (ESSERVSYYF…EQKKAYEVAA (369 aa)) lie on the Extracellular side of the membrane. Intrachain disulfides connect cysteine 92/cysteine 193, cysteine 289/cysteine 364, cysteine 307/cysteine 360, cysteine 311/cysteine 358, cysteine 320/cysteine 342, and cysteine 322/cysteine 334. N-linked (GlcNAc...) asparagine glycans are attached at residues asparagine 365 and asparagine 392. Residues 428–448 (LLGDIGGQMGLFIGASILTIL) form a helical membrane-spanning segment. The short motif at 441–443 (GAS) is the GAS motif; ion selectivity filter element. Residues 449–512 (ELFDYIYELI…ALGTLEEIAC (64 aa)) are Cytoplasmic-facing.

This sequence belongs to the amiloride-sensitive sodium channel (TC 1.A.6) family. ASIC2 subfamily. In terms of assembly, can form homotrimers. Heterotrimer; forms functional heterotrimers producing channel with different properties. Forms heterotrimers with ASIC1; while ASIC1 determines current amplitude, ASIC2 influences the properties of the current. Forms heterotrimers with ASIC3; resulting in channels with distinct properties. Interacts with STOM; STOM regulates the gating of ASIC2-containing channels. Interacts with PICK1; promotes ASIC3 phosphorylation by PKC and activation of ASIC2/ASIC3 heterotrimers. In terms of tissue distribution, expressed by sensory neurons. Expressed by nociceptive sensory neurons, spiral ganglion (SG) neurons and the retina (at protein level). Expressed in outer nuclear layer of retina (photoreceptors) and to a lower extent in distal and proximal inner nuclear layer.

The protein resides in the cell membrane. It carries out the reaction Na(+)(in) = Na(+)(out). The enzyme catalyses K(+)(in) = K(+)(out). It catalyses the reaction Li(+)(in) = Li(+)(out). Inhibited by the diuretic drug amiloride. In terms of biological role, forms pH-gated trimeric sodium channels that act as postsynaptic excitatory sensors in the nervous system. Upon extracellular acidification, these channels generate rapid, transient inward currents that fully desensitize. Highly selective for sodium, they are permeable to other cations. By forming heterotrimeric channels with ASIC1, could contribute to synaptic plasticity, learning, and memory. Additionally, as acid sensors at nerve terminals, plays a role in mechanosensation and phototransduction. Has no pH-gated sodium channel activity per se but can associate with other ASICs to produce functional channels with specific properties. The protein is Acid-sensing ion channel 2 of Mus musculus (Mouse).